A 368-amino-acid polypeptide reads, in one-letter code: MFLSLRPSLSVSRLAVVRRAYSSPASKKQINDGLVPLPHKEVIDMAFDLHLPERSVIGKLPYHSPEPIIFFHGLLGSKRNYKHDCKKLATALQTPVYTVDVRNHGSSEHALPFNYGTLVNDLVHFIHQHKLGKVNIIGYSLGAKVGMLACLKHPELFSAACIIDNAPEPQPHIKAFLSTLIKSCVKLLDQGKVRVDDKLWRHKASESLKRYLPNAGVRNYVLNNIVHNPRVVEYRSPVINYDDGLIHFKNPVRHMLDCGVKDVADWPTEEVKDKKFLGPVNFIRATKSAFINPDSLKAINSFFPFNNIHEINATHFVLNERPQEYLRAVIDFFKVTRYQLENKRNKDPNNYMQTQNSISNSDTMGQSL.

Residues 1-21 (MFLSLRPSLSVSRLAVVRRAY) constitute a mitochondrion transit peptide. The AB hydrolase-1 domain maps to 67 to 171 (PIIFFHGLLG…IIDNAPEPQP (105 aa)). Residues Ser-140, Asp-164, and His-315 each act as charge relay system in the active site. A disordered region spans residues 344-368 (RNKDPNNYMQTQNSISNSDTMGQSL). A compositionally biased stretch (polar residues) spans 348–368 (PNNYMQTQNSISNSDTMGQSL).

It belongs to the AB hydrolase superfamily.

The protein localises to the mitochondrion. The enzyme catalyses ethanol + acetyl-CoA = ethyl acetate + CoA. It catalyses the reaction acetyl-CoA + H2O = acetate + CoA + H(+). It carries out the reaction ethyl acetate + H2O = ethanol + acetate + H(+). Alcohol acetyltransferase that catalyzes the synthesis of ethyl acetate from ethanol and acetyl-CoA. Can also function as a thioesterase by hydrolyzing acetyl-CoA in the absence of ethanol, as well as esterase hydrolyzing ethyl acetate. The sequence is that of Ethanol acetyltransferase 1 (EAT1) from Kluyveromyces lactis (strain ATCC 8585 / CBS 2359 / DSM 70799 / NBRC 1267 / NRRL Y-1140 / WM37) (Yeast).